A 325-amino-acid polypeptide reads, in one-letter code: MPVFDYEDIQLVPNKCIVKSRSEVNTKVKFGPMTFKIPVVPANMQTIIDENLAVWLAKNGYFYIMHRFYENERVDFVKNMHDKGLFASISVGVKPAEYDLIDELSQKNLVPEYITIDIAHGHSDTVINMIKHIKHKLPGVFVIAGNVGTPEAVRELENAGADATKVGIGPGKACITKLKTGFGTGGWQLAAIRACAKAASKPIVADGGIRNNGDIAKSIRFGASMCMIGSLFAGHDETPGDIIEKDGKKFKTYFGSASQYQKGEYKNVEGKKLLLPYKGKIADTLREMQEDLQSAISYAGGKELLALRKVDYVIVKNSIYNGDML.

Residue Cys174 is the Thioimidate intermediate of the active site. Residue 203 to 226 (IVADGGIRNNGDIAKSIRFGASMC) coordinates NADP(+).

This sequence belongs to the IMPDH/GMPR family. GuaC type 2 subfamily.

It carries out the reaction IMP + NH4(+) + NADP(+) = GMP + NADPH + 2 H(+). Functionally, catalyzes the irreversible NADPH-dependent deamination of GMP to IMP. It functions in the conversion of nucleobase, nucleoside and nucleotide derivatives of G to A nucleotides, and in maintaining the intracellular balance of A and G nucleotides. In Ligilactobacillus salivarius (strain UCC118) (Lactobacillus salivarius), this protein is GMP reductase.